Consider the following 174-residue polypeptide: DNA replication inhibitor plutonium (174 aa).

2 ANK repeats span residues 39-68 (YGNT…NIFA) and 72-103 (FGQN…DFNL). Thr167 is modified (phosphothreonine).

In terms of biological role, inhibits DNA replication early in developments. May bind and block the action of a replication or initiation factor. The protein is DNA replication inhibitor plutonium (plu) of Drosophila melanogaster (Fruit fly).